A 275-amino-acid chain; its full sequence is Large ribosomal subunit protein uL2 (275 aa).

Disordered regions lie at residues 28–59 (KPFAPLLDSQSTTAGRNNNGHITTRHKGGGHK) and 224–275 (AMNP…RHKR). Positions 35 to 49 (DSQSTTAGRNNNGHI) are enriched in polar residues. Residues 50–59 (TTRHKGGGHK) are compositionally biased toward basic residues.

Belongs to the universal ribosomal protein uL2 family. In terms of assembly, part of the 50S ribosomal subunit. Forms a bridge to the 30S subunit in the 70S ribosome.

Its function is as follows. One of the primary rRNA binding proteins. Required for association of the 30S and 50S subunits to form the 70S ribosome, for tRNA binding and peptide bond formation. It has been suggested to have peptidyltransferase activity; this is somewhat controversial. Makes several contacts with the 16S rRNA in the 70S ribosome. In Paraburkholderia xenovorans (strain LB400), this protein is Large ribosomal subunit protein uL2.